The sequence spans 120 residues: MHAISQIRLTFNQDRPDLHDDDSAGLAVQEAKPALQAPPMYKVVLFNDDYTPMDFVVEVLEMFFNLNRELATKVMLAVHTEGRAVCGLFTRDIAETKAMQVNQYARESQHPLLCEIEKDG.

Belongs to the ClpS family. In terms of assembly, binds to the N-terminal domain of the chaperone ClpA.

Involved in the modulation of the specificity of the ClpAP-mediated ATP-dependent protein degradation. This is ATP-dependent Clp protease adapter protein ClpS from Pseudomonas fluorescens (strain ATCC BAA-477 / NRRL B-23932 / Pf-5).